The following is a 283-amino-acid chain: Mitochondrial outer membrane protein porin (283 aa).

This sequence belongs to the eukaryotic mitochondrial porin family.

The protein localises to the mitochondrion outer membrane. In terms of biological role, forms a channel through the cell membrane that allows diffusion of small hydrophilic molecules. The channel adopts an open conformation at low or zero membrane potential and a closed conformation at potentials above 30-40 mV. The open state has a weak anion selectivity whereas the closed state is cation-selective. The chain is Mitochondrial outer membrane protein porin from Neurospora crassa (strain ATCC 24698 / 74-OR23-1A / CBS 708.71 / DSM 1257 / FGSC 987).